An 842-amino-acid chain; its full sequence is Netrin receptor UNC5A (842 aa).

The N-terminal stretch at 1 to 25 (MAVRPGLWPALLGIVLAAWLRGSGA) is a signal peptide. The Extracellular portion of the chain corresponds to 26-306 (QQSATVANPV…ASGPEDVALY (281 aa)). In terms of domain architecture, Ig-like spans 44–141 (PHFLVEPEDV…SGTTKSQKAY (98 aa)). Disulfide bonds link Cys65–Cys126, Cys77–Cys124, and Cys170–Cys221. N-linked (GlcNAc...) asparagine glycans are attached at residues Asn107 and Asn218. The region spanning 155–234 (PLAKEVSLEQ…NIVARRRSAS (80 aa)) is the Ig-like C2-type domain. In terms of domain architecture, TSP type-1 spans 242–294 (DGSWSPWSKWSACGLDCTHWRSRECSDPAPRNGGEECQGTDLDTRNCTSDLCV). Trp245, Trp248, and Trp251 each carry a C-linked (Man) tryptophan glycan. Disulfide bonds link Cys254–Cys288, Cys258–Cys293, and Cys266–Cys278. The N-linked (GlcNAc...) asparagine glycan is linked to Asn287. A helical membrane pass occupies residues 307–327 (VGLIAVAVCLVLLLLVLILVY). The Cytoplasmic portion of the chain corresponds to 328-842 (CRKKEGLDSD…GLFTVSEAEC (515 aa)). The ZU5 domain occupies 441-584 (NMTYGTFNFL…LGRFALVGEA (144 aa)). The tract at residues 605–623 (SLEYNIRVYCLHDTHDALK) is interaction with DCC. The 81-residue stretch at 761–841 (QKIISSLDPP…AGLFTVSEAE (81 aa)) folds into the Death domain.

It belongs to the unc-5 family. In terms of assembly, homodimer and homooligomer. Interacts with the cytoplasmic part of DCC. Interacts with MAGED1. Interacts with PRKCABP, possibly mediating some interaction with PKC. Interacts (via extracellular domain) with FLRT2 (via extracellular domain). Interacts (via extracellular domain) with FLRT3 (via extracellular domain). Phosphorylated on cytoplasmic tyrosine residues. Phosphorylated by PKC in vitro. In terms of processing, proteolytically cleaved by caspases during apoptosis. The cleavage does not take place when the receptor is associated with netrin ligand. Its cleavage by caspases is required to induce apoptosis. Post-translationally, the two extracellular TSRs of UNC5A contain WxxWxxWxxC motifs that can be C-mannosylated on all tryptophans. DPY19L1 preferentially mannosylates the first two tryptophans and DPY19L3 prefers the third. C-mannosylation by DPY19L1 is required for transport of UNC5A from the endoplasmic reticulum to the cell surface.

The protein resides in the cell membrane. It localises to the membrane raft. The protein localises to the cell projection. Its subcellular location is the neuron projection. In terms of biological role, receptor for netrin required for axon guidance. Functions in the netrin signaling pathway and promotes neurite outgrowth in response to NTN1. Mediates axon repulsion of neuronal growth cones in the developing nervous system in response to netrin. Axon repulsion in growth cones may be mediated by its association with DCC that may trigger signaling for repulsion. It also acts as a dependence receptor required for apoptosis induction when not associated with netrin ligand. The polypeptide is Netrin receptor UNC5A (UNC5A) (Homo sapiens (Human)).